Here is a 101-residue protein sequence, read N- to C-terminus: Chaperone modulatory protein CbpM (101 aa).

It belongs to the CbpM family.

Its function is as follows. Interacts with CbpA and inhibits both the DnaJ-like co-chaperone activity and the DNA binding activity of CbpA. Together with CbpA, modulates the activity of the DnaK chaperone system. Does not inhibit the co-chaperone activity of DnaJ. The polypeptide is Chaperone modulatory protein CbpM (Salmonella paratyphi A (strain ATCC 9150 / SARB42)).